Reading from the N-terminus, the 507-residue chain is FSD1-like protein (507 aa).

A coiled-coil region spans residues 70 to 109 (KQEQVRKSQELQSQLSQCNNALENSEELLEFATRSLDIKE). Positions 105–162 (LDIKEPEEFSKAARQIKDRVTMASAFRLSLKPKVSDNMTHLMVDFSQERQMLQTLKFL) constitute a COS domain. In terms of domain architecture, Fibronectin type-III spans 164-268 (VPKAPEIDPV…DPVTLETRAL (105 aa)). The region spanning 291–484 (DPTGGKGQES…LSTGMQVPSA (194 aa)) is the B30.2/SPRY domain. A disordered region spans residues 292–345 (PTGGKGQESKIKGKENKGSVHVTSLKKHTSGTPSPKRTSVGSRPPAVRGSRDRF). Over residues 298–309 (QESKIKGKENKG) the composition is skewed to basic and acidic residues. The segment covering 321–332 (SGTPSPKRTSVG) has biased composition (polar residues). Phosphoserine occurs at positions 498 and 501.

The protein is FSD1-like protein (Fsd1l) of Mus musculus (Mouse).